The chain runs to 136 residues: Alpha-2-purothionin (136 aa).

Residues 1–27 (MGSKGLKGVMVCLLILGLVLEQVQVEG) form the signal peptide. 4 disulfides stabilise this stretch: Cys30/Cys66, Cys31/Cys58, Cys39/Cys56, and Cys43/Cys52. The propeptide at 73 to 136 (LALESNSDEP…GDAGLTSLDA (64 aa)) is acidic domain.

This sequence belongs to the plant thionin (TC 1.C.44) family. 4 C-C subfamily.

It is found in the secreted. Functionally, thionins are small plant proteins which are toxic to animal cells. They seem to exert their toxic effect at the level of the cell membrane. Their precise function is not known. The protein is Alpha-2-purothionin (THI1.2) of Triticum aestivum (Wheat).